The following is a 635-amino-acid chain: Chaperone protein DnaK (635 aa).

Residue threonine 200 is modified to Phosphothreonine; by autocatalysis. The interval 595–635 is disordered; the sequence is KAQPLTEKVQAKSSAENTSKEKSKADDDVVDADFEEVKDDK. Positions 612-621 are enriched in basic and acidic residues; that stretch reads TSKEKSKADD. Residues 622-635 show a composition bias toward acidic residues; sequence DVVDADFEEVKDDK.

Belongs to the heat shock protein 70 family.

Acts as a chaperone. The protein is Chaperone protein DnaK of Ruthia magnifica subsp. Calyptogena magnifica.